Reading from the N-terminus, the 129-residue chain is uncharacterized protein (129 aa).

This is an uncharacterized protein from Archaeoglobus fulgidus (strain ATCC 49558 / DSM 4304 / JCM 9628 / NBRC 100126 / VC-16).